The chain runs to 196 residues: Holliday junction branch migration complex subunit RuvA (196 aa).

Residues Met1–Cys69 are domain I. Residues Glu70 to Ile148 are domain II. A flexible linker region spans residues Ala149 to Glu157. Residues Glu157 to Ala196 are domain III.

Belongs to the RuvA family. In terms of assembly, homotetramer. Forms an RuvA(8)-RuvB(12)-Holliday junction (HJ) complex. HJ DNA is sandwiched between 2 RuvA tetramers; dsDNA enters through RuvA and exits via RuvB. An RuvB hexamer assembles on each DNA strand where it exits the tetramer. Each RuvB hexamer is contacted by two RuvA subunits (via domain III) on 2 adjacent RuvB subunits; this complex drives branch migration. In the full resolvosome a probable DNA-RuvA(4)-RuvB(12)-RuvC(2) complex forms which resolves the HJ.

The protein localises to the cytoplasm. In terms of biological role, the RuvA-RuvB-RuvC complex processes Holliday junction (HJ) DNA during genetic recombination and DNA repair, while the RuvA-RuvB complex plays an important role in the rescue of blocked DNA replication forks via replication fork reversal (RFR). RuvA specifically binds to HJ cruciform DNA, conferring on it an open structure. The RuvB hexamer acts as an ATP-dependent pump, pulling dsDNA into and through the RuvAB complex. HJ branch migration allows RuvC to scan DNA until it finds its consensus sequence, where it cleaves and resolves the cruciform DNA. This is Holliday junction branch migration complex subunit RuvA from Helicobacter hepaticus (strain ATCC 51449 / 3B1).